The sequence spans 229 residues: Potassium/proton antiporter CemA (229 aa).

3 consecutive transmembrane segments (helical) span residues 6 to 26 (AFIP…ISLC), 107 to 127 (ILHF…SFWG), and 189 to 209 (ILSG…KYWI).

The protein belongs to the CemA family.

The protein localises to the plastid. The protein resides in the chloroplast inner membrane. It carries out the reaction K(+)(in) + H(+)(out) = K(+)(out) + H(+)(in). In terms of biological role, contributes to K(+)/H(+) antiport activity by supporting proton efflux to control proton extrusion and homeostasis in chloroplasts in a light-dependent manner to modulate photosynthesis. Prevents excessive induction of non-photochemical quenching (NPQ) under continuous-light conditions. Indirectly promotes efficient inorganic carbon uptake into chloroplasts. This Barbarea verna (Land cress) protein is Potassium/proton antiporter CemA.